The sequence spans 235 residues: MEFHPPLQSATLIRRYKRFLADVITPEGETLTIHCANTGAMTGCATPGDTVWYSTSDNPKRKYPNSWELTETPAGHWICVNTLRANDLVAEAIAQNAIPEFSEYKKISREVKYGEENSRIDLLLQAEQQVNCYIEVKSVTLLQENCGYFPDAVTTRGQKHLRELQHIAEQGQRAVLFFAVLHSGINQVAAAAHIDHNYSSLLEQAQNSGVEVICYQANMTGKGMVLGDKLTFLLK.

The protein belongs to the SfsA family.

The sequence is that of Sugar fermentation stimulation protein homolog from Photorhabdus laumondii subsp. laumondii (strain DSM 15139 / CIP 105565 / TT01) (Photorhabdus luminescens subsp. laumondii).